A 381-amino-acid chain; its full sequence is Cyclin-dependent kinase inhibitor CIP1 (381 aa).

The segment covering 1–11 (MLLERLHKRLH) has biased composition (basic residues). The tract at residues 1-30 (MLLERLHKRLHAGSSRRSQENKDKNCKPED) is disordered. Basic and acidic residues predominate over residues 17 to 30 (RSQENKDKNCKPED). Residues threonine 65, threonine 69, and threonine 73 each carry the phosphothreonine modification.

Interact with the CDC28/CLN2 complex. In terms of processing, phosphorylated during S phase in a CDC28-dependent manner. Phosphorylated at Thr-65 and Thr-73 by HOG1 under osmotic stress. The phosphorylations of Thr-65 and Thr-73 are necessary for CIP1-induced growth inhibition.

It is found in the cytoplasm. Its subcellular location is the nucleus. Its function is as follows. Acts as an inhibitor of the CDC28/CLN2 cyclin-dependent kinase complex. Stabilizes the CDC28 inhibitor SIC1. Negatively regulates the G1/S phase transition. Contributes to osmostress-induced transitory G1 delay. This Saccharomyces cerevisiae (strain ATCC 204508 / S288c) (Baker's yeast) protein is Cyclin-dependent kinase inhibitor CIP1.